The following is a 131-amino-acid chain: MSWQAYVDDHLMCEIEGNHLSAAAIIGHNGSVWAQSATFPQLKPEEVTGIMNDFNEPGSLAPTGLYLGGTKYMVIQGEPGVVIRGKKGPGGVTVKKSTMALLIGIYDEPMTPGQCNMVVERLGDYLIEQGL.

It belongs to the profilin family. In terms of assembly, occurs in many kinds of cells as a complex with monomeric actin in a 1:1 ratio.

It localises to the cytoplasm. The protein resides in the cytoskeleton. Its function is as follows. Binds to actin and affects the structure of the cytoskeleton. At high concentrations, profilin prevents the polymerization of actin, whereas it enhances it at low concentrations. By binding to PIP2, it inhibits the formation of IP3 and DG. The sequence is that of Profilin-2 from Malus domestica (Apple).